Here is a 492-residue protein sequence, read N- to C-terminus: Ketol-acid reductoisomerase (NADP(+)) (492 aa).

The region spanning Leu14–Ser208 is the KARI N-terminal Rossmann domain. Residues Cys45–Gln48, Arg68, Arg76, Ser78, and Asp108–Gln110 contribute to the NADP(+) site. His132 is a catalytic residue. Residue Gly158 participates in NADP(+) binding. 2 KARI C-terminal knotted domains span residues Ser209 to Gln344 and Phe345 to Met485. Residues Asp217, Glu221, Glu389, and Glu393 each coordinate Mg(2+). Ser414 is a substrate binding site.

It belongs to the ketol-acid reductoisomerase family. The cofactor is Mg(2+).

It catalyses the reaction (2R)-2,3-dihydroxy-3-methylbutanoate + NADP(+) = (2S)-2-acetolactate + NADPH + H(+). The enzyme catalyses (2R,3R)-2,3-dihydroxy-3-methylpentanoate + NADP(+) = (S)-2-ethyl-2-hydroxy-3-oxobutanoate + NADPH + H(+). The protein operates within amino-acid biosynthesis; L-isoleucine biosynthesis; L-isoleucine from 2-oxobutanoate: step 2/4. It participates in amino-acid biosynthesis; L-valine biosynthesis; L-valine from pyruvate: step 2/4. Involved in the biosynthesis of branched-chain amino acids (BCAA). Catalyzes an alkyl-migration followed by a ketol-acid reduction of (S)-2-acetolactate (S2AL) to yield (R)-2,3-dihydroxy-isovalerate. In the isomerase reaction, S2AL is rearranged via a Mg-dependent methyl migration to produce 3-hydroxy-3-methyl-2-ketobutyrate (HMKB). In the reductase reaction, this 2-ketoacid undergoes a metal-dependent reduction by NADPH to yield (R)-2,3-dihydroxy-isovalerate. This chain is Ketol-acid reductoisomerase (NADP(+)), found in Pectobacterium atrosepticum (strain SCRI 1043 / ATCC BAA-672) (Erwinia carotovora subsp. atroseptica).